The sequence spans 344 residues: Heat-inducible transcription repressor HrcA (344 aa).

It belongs to the HrcA family.

Its function is as follows. Negative regulator of class I heat shock genes (grpE-dnaK-dnaJ and groELS operons). Prevents heat-shock induction of these operons. The protein is Heat-inducible transcription repressor HrcA of Streptococcus pyogenes serotype M1.